Here is a 519-residue protein sequence, read N- to C-terminus: Putative tyrosine carboxypeptidase MATCAP2 (519 aa).

Positions 63-103 (SKEEKKHRSQKRFSSASSKQHRKPSKSPSSSHSKDPSRMTA) are disordered. His330 is a Zn(2+) binding site. Glu331 acts as the Nucleophile in catalysis. Zn(2+) is bound by residues His335 and Glu366.

Zn(2+) is required as a cofactor.

In terms of biological role, putative tyrosine carboxypeptidase. The protein is Putative tyrosine carboxypeptidase MATCAP2 of Mus musculus (Mouse).